Consider the following 216-residue polypeptide: Pyrophosphatase PpaX (216 aa).

Asp9 functions as the Nucleophile in the catalytic mechanism.

It belongs to the HAD-like hydrolase superfamily. PpaX family. It depends on Mg(2+) as a cofactor.

It carries out the reaction diphosphate + H2O = 2 phosphate + H(+). Its function is as follows. Hydrolyzes pyrophosphate formed during P-Ser-HPr dephosphorylation by HPrK/P. Might play a role in controlling the intracellular pyrophosphate pool. The protein is Pyrophosphatase PpaX of Bacillus cereus (strain Q1).